The primary structure comprises 235 residues: Pathogen-related protein (235 aa).

The polypeptide is Pathogen-related protein (Hordeum vulgare (Barley)).